Consider the following 702-residue polypeptide: Mesothelin-like protein (702 aa).

A signal peptide spans 1–35 (MAAAVTIPGPRIGALQSSGLTLLLSLAAHCSGPQA). Over 36-638 (KVLSPGGLDA…AQASTSGSLW (603 aa)) the chain is Extracellular. N-linked (GlcNAc...) asparagine glycosylation is found at Asn-122, Asn-307, and Asn-424. The disordered stretch occupies residues 588–611 (QLGLDASPTSPTGPAHGTRGPPST). The helical transmembrane segment at 639-668 (APLGYLPLAMALPCSLLCLLHWGTCILVSV) threads the bilayer. Topologically, residues 669–702 (DSVASGWLGSQGSGAGKTEVLDSAGRPLGLTGQL) are cytoplasmic.

It belongs to the mesothelin family.

It localises to the membrane. May play a role in cellular adhesion. The chain is Mesothelin-like protein (MSLNL) from Homo sapiens (Human).